Here is a 1505-residue protein sequence, read N- to C-terminus: MAYNWQTEPNRAEPQEGGHDHQQCHHADQHLSSRQVRLGFDQLVEELSNKTPLPEDEKEGTCFVPDTPNLDSKWQSIYGPHPRHFNEFTSQSPHFSQLPFGKASAIGFNPAVLPAHQFIHEGASWRNPTRKYHGGEDPRFSALTPSSTGLDKCHQQGQSGTEHCNYYVEPENNVPHHYSPYSMDSIPDSEEKGSGDADLVEPSLVFSKDSFLPRASENMSVESTEPIGCPLEIVEAPQGSNKSLASFCNNVTKIRGLYHASDTNSNSGKIWAITTAYPSRLFADTQFRVKISTDNSAQLLLLKPPANYLVKDLIAEILLLCANEQLSPKEYLLSICGSEEFLQTDHCLGSHKIFQKSKSVIQLHLQRSRDTPGKLSRKRDDDRSRVHLNQLLEFTHIWKISRQCLSTVMKSYNLHVEHLLKTQEDVEEKPLSSMFSCGRHPPQPHGNDIIEDVRNICSVLGCIETKQVSDAVKELTLILQRPSQNFHQNSETSKKGFIENVTSELSRSLHQLVDVYCSSFCTDFRPARAPGGVSRDHAGLHSHLSFTVCSLHNVPETWAHSYKAFSFSCWLTYAGKKLCQVKSCRSLPVTKSFSFSVNWNEIINFPLEIKSLPRESMLVIKLFGIDSATHSANLLAWTCLPLFPKEKSPLGSRLLSMTLQSEPPIEMMAPGVWDGSQPTPLTLQIDFPAATWEYVKPETEENRTDHQEPPRECLKHIARLSQKQPPLLLSVEKRRYLWFYRFYCNNENSSLPLVLGSAPGWDEGTVSEMHAVLRRWTFSHPLEALGLLTSRFPDQDIREVAVQQLDNFLTDELLDCLPQLVQAVKFEWSLESPLVELLLHRSLQSIRVAHRLFWLLRDAQGEDYFKSWYQELLAALQFCAGEALIEELSKEQKLVKLLGDIGEKVKSAGDAQRKDVLKKEIGSLEEFFKDIKTCHLPLNPALCVKGIDRDACSYFTSNALPLKITFINANPMGKNISVIFKAGDDLRQDMLVLQIIQVMDNVWLQEGLDMQMIIYGCLATGKAQGFIEMVPDAVTLAKIHLHSGLIGPLKENTIKKWFSQHNHLKEDYEKALRNFFYSCAGWCVVTFILGVCDRHNDNIMLTKSGHMFHIDFGKFLGHAQTFGGIKRDRAPFIFTSEMEYFITEGGKNTQHFQDFVELCCRAYNIVRKHSQLLLSLLEMMLHAGLPELRGIEDLKYVHDNLRPQDTDLEATSHFTTKIKQSLECFPVKLNNLIHTLAQMPAFSLARPAPQTPPQECCVLNKTRTIQRVTILGFSKTHSNLYLIEVTRSDNRKNLAKKSFEQFYRLHSQIQKQFPLLTLPEFPHWWHLPFTDSHHERIRDLSHYVEQVLHGSYEVANSDCVLSFFLSEHIQQTLEDSPFVDPGDHSPDKSPQVQLLMTYEDTKLTILVKHLKNIHLPDGSAPSAHVEIYLLPHPSEVRRKKTKCVPKCTDPTYNEIVVYDDVSGLQGHVLMLIVKSKTVFVGAVNIQLCSVPLNEEKWYPLGNSII.

Positions 1–32 are disordered; the sequence is MAYNWQTEPNRAEPQEGGHDHQQCHHADQHLS. The segment covering 10–31 has biased composition (basic and acidic residues); that stretch reads NRAEPQEGGHDHQQCHHADQHL. Residues 278–370 form the PI3K-RBD domain; sequence PSRLFADTQF…IQLHLQRSRD (93 aa). The C2 PI3K-type domain occupies 540 to 688; that stretch reads LHSHLSFTVC…TPLTLQIDFP (149 aa). Residues 703 to 879 enclose the PIK helical domain; that stretch reads RTDHQEPPRE…QELLAALQFC (177 aa). In terms of domain architecture, PI3K/PI4K catalytic spans 948 to 1226; the sequence is DRDACSYFTS…KIKQSLECFP (279 aa). The G-loop stretch occupies residues 954 to 960; it reads YFTSNAL. Positions 1090–1098 are catalytic loop; the sequence is GVCDRHNDN. Positions 1109 to 1135 are activation loop; that stretch reads HIDFGKFLGHAQTFGGIKRDRAPFIFT. Residues 1259–1371 enclose the PX domain; sequence LNKTRTIQRV…SFFLSEHIQQ (113 aa). The C2 domain occupies 1384 to 1505; the sequence is HSPDKSPQVQ…KWYPLGNSII (122 aa).

The protein belongs to the PI3/PI4-kinase family. As to expression, predominantly expressed in normal liver. High levels also found in regenerating liver. Very low levels found in heart and testis.

It localises to the membrane. It catalyses the reaction a 1,2-diacyl-sn-glycero-3-phospho-(1D-myo-inositol) + ATP = a 1,2-diacyl-sn-glycero-3-phospho-(1D-myo-inositol-3-phosphate) + ADP + H(+). It carries out the reaction a 1,2-diacyl-sn-glycero-3-phospho-(1D-myo-inositol 4-phosphate) + ATP = a 1,2-diacyl-sn-glycero-3-phospho-(1D-myo-inositol-3,4-bisphosphate) + ADP + H(+). Functionally, generates phosphatidylinositol 3-phosphate (PtdIns3P) and phosphatidylinositol 3,4-bisphosphate (PtdIns(3,4)P2) that act as second messengers. May play a role in SDF1A-stimulated chemotaxis. The polypeptide is Phosphatidylinositol 3-kinase C2 domain-containing subunit gamma (Pik3c2g) (Rattus norvegicus (Rat)).